Consider the following 993-residue polypeptide: Nisin biosynthesis protein NisB (993 aa).

Residues 838 to 851 (AIFCADSKIIPNLL) form a helical membrane-spanning segment.

It to B.subtilis SpaB and S.epidermidis EpiB.

The protein localises to the cell membrane. In terms of biological role, involved in the post-translational modification of the lantibiotic nisin. The sequence is that of Nisin biosynthesis protein NisB (nisB) from Lactococcus lactis subsp. lactis (Streptococcus lactis).